Reading from the N-terminus, the 551-residue chain is Arylsulfatase (551 aa).

The signal sequence occupies residues M1–T20. At Q21 the chain carries Blocked amino end (Gln). Residues D60, H61, and C100 each coordinate Ca(2+). The active-site Nucleophile is the C100. Position 100 is a 3-oxoalanine (Cys) (C100). Residue H158 is part of the active site. N-linked (GlcNAc...) asparagine glycans are attached at residues N164, N213, and N296. 2 residues coordinate Ca(2+): D308 and H309.

It belongs to the sulfatase family. It depends on Ca(2+) as a cofactor. Post-translationally, the conversion to 3-oxoalanine (also known as C-formylglycine, FGly), of a serine or cysteine residue in prokaryotes and of a cysteine residue in eukaryotes, is critical for catalytic activity.

The protein resides in the cytoplasm. It is found in the secreted. It localises to the extracellular space. The protein localises to the extracellular matrix. It carries out the reaction an aryl sulfate + H2O = a phenol + sulfate + H(+). Its function is as follows. May be a structural component of the extracellular matrices involved in cell movement during morphogenesis. The polypeptide is Arylsulfatase (Hemicentrotus pulcherrimus (Sea urchin)).